We begin with the raw amino-acid sequence, 283 residues long: Shikimate dehydrogenase (NADP(+)) (283 aa).

Shikimate is bound by residues 22–24 (SRS) and Thr-69. Lys-73 functions as the Proton acceptor in the catalytic mechanism. 2 residues coordinate shikimate: Asn-93 and Asp-108. Residues 133-137 (GAGGS) and Leu-222 each bind NADP(+). Tyr-224 contributes to the shikimate binding site. Gly-245 lines the NADP(+) pocket.

The protein belongs to the shikimate dehydrogenase family. Homodimer.

The enzyme catalyses shikimate + NADP(+) = 3-dehydroshikimate + NADPH + H(+). The protein operates within metabolic intermediate biosynthesis; chorismate biosynthesis; chorismate from D-erythrose 4-phosphate and phosphoenolpyruvate: step 4/7. In terms of biological role, involved in the biosynthesis of the chorismate, which leads to the biosynthesis of aromatic amino acids. Catalyzes the reversible NADPH linked reduction of 3-dehydroshikimate (DHSA) to yield shikimate (SA). In Rhodopseudomonas palustris (strain BisB5), this protein is Shikimate dehydrogenase (NADP(+)).